The chain runs to 108 residues: ATP-dependent Clp protease adapter protein ClpS (108 aa).

It belongs to the ClpS family. In terms of assembly, binds to the N-terminal domain of the chaperone ClpA.

In terms of biological role, involved in the modulation of the specificity of the ClpAP-mediated ATP-dependent protein degradation. This is ATP-dependent Clp protease adapter protein ClpS from Cupriavidus necator (strain ATCC 17699 / DSM 428 / KCTC 22496 / NCIMB 10442 / H16 / Stanier 337) (Ralstonia eutropha).